The sequence spans 183 residues: Capsid protein (183 aa).

Positions 136-183 are disordered; it reads NAPILSTLPETTVVRRRGRSPRRRTPSPRRRRSQSPRRRRSQSRESQC. Residues 149–176 are compositionally biased toward basic residues; sequence VRRRGRSPRRRTPSPRRRRSQSPRRRRS. Ser155, Ser162, and Ser170 each carry phosphoserine; by host. One copy of the 1; half-length repeat lies at 155–161; sequence SPRRRTP. A 3 X 8 AA repeats of S-P-R-R-R-[PR]-S-Q region spans residues 155–177; that stretch reads SPRRRTPSPRRRRSQSPRRRRSQ. The short motif at 158–175 is the Bipartite nuclear localization signal element; sequence RRTPSPRRRRSQSPRRRR. A run of 2 repeats spans residues 162 to 169 and 170 to 177. The tract at residues 177 to 183 is RNA binding; that stretch reads QSRESQC.

Belongs to the orthohepadnavirus core antigen family. As to quaternary structure, homodimerizes, then multimerizes. Interacts with cytosol exposed regions of viral L glycoprotein present in the reticulum-to-Golgi compartment. Interacts with human FLNB. Phosphorylated form interacts with host importin alpha; this interaction depends on the exposure of the NLS, which itself depends upon genome maturation and/or phosphorylation of the capsid protein. Interacts with host NUP153. In terms of processing, phosphorylated by host SRPK1, SRPK2, and maybe protein kinase C or GAPDH. Phosphorylation is critical for pregenomic RNA packaging. Protein kinase C phosphorylation is stimulated by HBx protein and may play a role in transport of the viral genome to the nucleus at the late step during the viral replication cycle.

The protein resides in the virion. It is found in the host cytoplasm. Its function is as follows. Self assembles to form an icosahedral capsid. Most capsids appear to be large particles with an icosahedral symmetry of T=4 and consist of 240 copies of capsid protein, though a fraction forms smaller T=3 particles consisting of 180 capsid proteins. Entering capsids are transported along microtubules to the nucleus. Phosphorylation of the capsid is thought to induce exposure of nuclear localization signal in the C-terminal portion of the capsid protein that allows binding to the nuclear pore complex via the importin (karyopherin-) alpha and beta. Capsids are imported in intact form through the nuclear pore into the nuclear basket, where it probably binds NUP153. Only capsids that contain the mature viral genome can release the viral DNA and capsid protein into the nucleoplasm. Immature capsids get stuck in the basket. Capsids encapsulate the pre-genomic RNA and the P protein. Pre-genomic RNA is reverse-transcribed into DNA while the capsid is still in the cytoplasm. The capsid can then either be directed to the nucleus, providing more genomes for transcription, or bud through the endoplasmic reticulum to provide new virions. The sequence is that of Capsid protein from Hepatitis B virus genotype B/C subtype adw (isolate Okinawa/pODW282/1998) (HBV-B).